The following is a 319-amino-acid chain: Malate dehydrogenase (319 aa).

Residues 7 to 13 (GAAGGIG) and Asp34 each bind NAD(+). 2 residues coordinate substrate: Arg81 and Arg87. Residues Asn94 and 117–119 (ITN) contribute to the NAD(+) site. Residues Asn119 and Arg153 each contribute to the substrate site. The Proton acceptor role is filled by His177. Residue Met227 participates in NAD(+) binding.

This sequence belongs to the LDH/MDH superfamily. MDH type 1 family. Homodimer.

The catalysed reaction is (S)-malate + NAD(+) = oxaloacetate + NADH + H(+). Catalyzes the reversible oxidation of malate to oxaloacetate. This is Malate dehydrogenase from Psychromonas ingrahamii (strain DSM 17664 / CCUG 51855 / 37).